A 101-amino-acid polypeptide reads, in one-letter code: Ascorbate-specific PTS system EIIB component (101 aa).

Positions 3-96 (VRILAVCGNG…KLLKVIKEHF (94 aa)) constitute a PTS EIIB type-2 domain. The active-site Phosphocysteine intermediate is Cys9. Cys9 bears the Phosphocysteine mark.

It is found in the cytoplasm. The enzyme catalyses N(pros)-phospho-L-histidyl-[protein] + L-ascorbate(out) = L-ascorbate 6-phosphate(in) + L-histidyl-[protein]. In terms of biological role, the phosphoenolpyruvate-dependent sugar phosphotransferase system (sugar PTS), a major carbohydrate active transport system, catalyzes the phosphorylation of incoming sugar substrates concomitantly with their translocation across the cell membrane. The enzyme II UlaABC PTS system is involved in ascorbate transport. This Shigella dysenteriae serotype 1 (strain Sd197) protein is Ascorbate-specific PTS system EIIB component (ulaB).